The chain runs to 334 residues: 4-hydroxy-3-methylbut-2-enyl diphosphate reductase (334 aa).

Cys19 is a [4Fe-4S] cluster binding site. His48 and His84 together coordinate (2E)-4-hydroxy-3-methylbut-2-enyl diphosphate. Positions 48 and 84 each coordinate dimethylallyl diphosphate. Residues His48 and His84 each coordinate isopentenyl diphosphate. [4Fe-4S] cluster is bound at residue Cys106. Residue His134 coordinates (2E)-4-hydroxy-3-methylbut-2-enyl diphosphate. Residue His134 participates in dimethylallyl diphosphate binding. His134 serves as a coordination point for isopentenyl diphosphate. Catalysis depends on Glu136, which acts as the Proton donor. (2E)-4-hydroxy-3-methylbut-2-enyl diphosphate is bound at residue Thr175. Cys205 serves as a coordination point for [4Fe-4S] cluster. (2E)-4-hydroxy-3-methylbut-2-enyl diphosphate-binding residues include Ser233, Ser234, Asn235, and Ser278. Residues Ser233, Ser234, Asn235, and Ser278 each coordinate dimethylallyl diphosphate. 4 residues coordinate isopentenyl diphosphate: Ser233, Ser234, Asn235, and Ser278.

Belongs to the IspH family. The cofactor is [4Fe-4S] cluster.

It carries out the reaction isopentenyl diphosphate + 2 oxidized [2Fe-2S]-[ferredoxin] + H2O = (2E)-4-hydroxy-3-methylbut-2-enyl diphosphate + 2 reduced [2Fe-2S]-[ferredoxin] + 2 H(+). The enzyme catalyses dimethylallyl diphosphate + 2 oxidized [2Fe-2S]-[ferredoxin] + H2O = (2E)-4-hydroxy-3-methylbut-2-enyl diphosphate + 2 reduced [2Fe-2S]-[ferredoxin] + 2 H(+). The protein operates within isoprenoid biosynthesis; dimethylallyl diphosphate biosynthesis; dimethylallyl diphosphate from (2E)-4-hydroxy-3-methylbutenyl diphosphate: step 1/1. It participates in isoprenoid biosynthesis; isopentenyl diphosphate biosynthesis via DXP pathway; isopentenyl diphosphate from 1-deoxy-D-xylulose 5-phosphate: step 6/6. Catalyzes the conversion of 1-hydroxy-2-methyl-2-(E)-butenyl 4-diphosphate (HMBPP) into a mixture of isopentenyl diphosphate (IPP) and dimethylallyl diphosphate (DMAPP). Acts in the terminal step of the DOXP/MEP pathway for isoprenoid precursor biosynthesis. This is 4-hydroxy-3-methylbut-2-enyl diphosphate reductase from Chelativorans sp. (strain BNC1).